A 216-amino-acid polypeptide reads, in one-letter code: Uracil phosphoribosyltransferase (216 aa).

5-phospho-alpha-D-ribose 1-diphosphate is bound by residues Arg84, Arg109, and 137–145 (DPMLATGNT). Uracil contacts are provided by residues Ile202 and 207-209 (GDA). A 5-phospho-alpha-D-ribose 1-diphosphate-binding site is contributed by Asp208.

Belongs to the UPRTase family. Mg(2+) serves as cofactor.

The enzyme catalyses UMP + diphosphate = 5-phospho-alpha-D-ribose 1-diphosphate + uracil. Its pathway is pyrimidine metabolism; UMP biosynthesis via salvage pathway; UMP from uracil: step 1/1. With respect to regulation, allosterically activated by GTP. Its function is as follows. Catalyzes the conversion of uracil and 5-phospho-alpha-D-ribose 1-diphosphate (PRPP) to UMP and diphosphate. This is Uracil phosphoribosyltransferase from Synechocystis sp. (strain ATCC 27184 / PCC 6803 / Kazusa).